The sequence spans 427 residues: Trigger factor (427 aa).

Residues 163–248 (GDTVVIDFVG…IHEVKAKEVP (86 aa)) enclose the PPIase FKBP-type domain.

The protein belongs to the FKBP-type PPIase family. Tig subfamily.

Its subcellular location is the cytoplasm. The catalysed reaction is [protein]-peptidylproline (omega=180) = [protein]-peptidylproline (omega=0). Functionally, involved in protein export. Acts as a chaperone by maintaining the newly synthesized protein in an open conformation. Functions as a peptidyl-prolyl cis-trans isomerase. The chain is Trigger factor from Streptococcus suis (strain 98HAH33).